Consider the following 448-residue polypeptide: MILGTPKADWLAEFPRLADLIALRPSEWFNPAIAPSAEALADVGLGAADVADASARLQRFAPLIARLFPETAASGGIIESDLVEVAAFHDALRQHYAAELPGRLWLKRDSHLPISGSIKARGGIYEVLAHAERLALEHGLIGLDDDYSRLAEADCRAFFARHRIAVGSTGNLGLSIGIIGAALGFQASVHMSADARQWKKDKLRAHGVTVVEYASDYSVAVEQGRREAAGDPYTHFVDDENSRDLFLGYAVAAERLRGQLDAAGIRVDSEHPLFVHLPCGVGGGPGGVAFGLKLAFGDAVHCLFAEPTHSPCMFLGVYTGRHEQVSVQDFGIDNRTAADGLAVGRPSGFVGRAMQRLLDGYYTVDDDELFRLLALLERSQGIRLEPSALAGAPGIARVTREPQGYRERMGLTSARLANATHLVWATGGGMVPETEMRAYLKRGRSLLD.

Lysine 119 bears the N6-(pyridoxal phosphate)lysine mark.

It belongs to the serine/threonine dehydratase family. DsdA subfamily. It depends on pyridoxal 5'-phosphate as a cofactor.

The enzyme catalyses D-serine = pyruvate + NH4(+). The chain is Probable D-serine dehydratase from Pseudomonas aeruginosa (strain UCBPP-PA14).